A 238-amino-acid chain; its full sequence is tRNA (guanine-N(7)-)-methyltransferase (238 aa).

The S-adenosyl-L-methionine site is built by glutamate 68, glutamate 93, aspartate 120, and aspartate 143. The active site involves aspartate 143. Substrate contacts are provided by residues lysine 147, aspartate 179, and 216–219 (TKFE).

This sequence belongs to the class I-like SAM-binding methyltransferase superfamily. TrmB family.

The enzyme catalyses guanosine(46) in tRNA + S-adenosyl-L-methionine = N(7)-methylguanosine(46) in tRNA + S-adenosyl-L-homocysteine. Its pathway is tRNA modification; N(7)-methylguanine-tRNA biosynthesis. Functionally, catalyzes the formation of N(7)-methylguanine at position 46 (m7G46) in tRNA. This is tRNA (guanine-N(7)-)-methyltransferase from Shewanella denitrificans (strain OS217 / ATCC BAA-1090 / DSM 15013).